We begin with the raw amino-acid sequence, 435 residues long: MAGGRPRPPRGFRDFPPEVMILRKRLLSRLERVFESYGFDPLDTPAVEYWETLSGKYGEEAESRLIWRFQDPWSGRWYALRYDLTVPLARFVASNPGLPMPFKRYHIGKVWRHEEPQKGRYREFVQCDADIVGSPYPEADAEIVSLAVDSIDALGLPGFRVRVNDRRLLAGVFEEELGFDNPLPIYRAIDKLDKIGVEGVRRELERLGLPGSTVERIMEIISWRGRPGEVLESVRRGYGSNEKVREALDHLEEMLSLADDKRVELDMSLVRGLDYYTGPILEVVLDEPRIGSVAGGGRYDGLVGMFAGRDIPATGVSIGIERIIDAGLELGVYSLDVKTVAQVAVVVLDRRYYRYAWEAARILRRGGLNVRIDLSRASGQVQRRKASRLGIPVLAFVGAKEAEGGFLTLYSAAKGERVAVPLGEAVKAVERLLPS.

It belongs to the class-II aminoacyl-tRNA synthetase family.

It is found in the cytoplasm. The catalysed reaction is tRNA(His) + L-histidine + ATP = L-histidyl-tRNA(His) + AMP + diphosphate + H(+). The sequence is that of Histidine--tRNA ligase (hisS) from Aeropyrum pernix (strain ATCC 700893 / DSM 11879 / JCM 9820 / NBRC 100138 / K1).